The following is an 847-amino-acid chain: DNA mismatch repair protein MutS (847 aa).

603-610 (GPNMSGKS) is an ATP binding site.

This sequence belongs to the DNA mismatch repair MutS family.

In terms of biological role, this protein is involved in the repair of mismatches in DNA. It is possible that it carries out the mismatch recognition step. This protein has a weak ATPase activity. The polypeptide is DNA mismatch repair protein MutS (Streptococcus suis (strain 98HAH33)).